A 472-amino-acid polypeptide reads, in one-letter code: Glutamine synthetase (472 aa).

Residues 17–101 (NNVKFVLLRF…IRCSVYEPTT (85 aa)) form the GS beta-grasp domain. The 364-residue stretch at 109–472 (PRSIAIRAEN…HPVEFEMYYA (364 aa)) folds into the GS catalytic domain. Glu-134 and Glu-136 together coordinate Mg(2+). Glu-212 contributes to the ATP binding site. Residues Glu-217 and Glu-225 each coordinate Mg(2+). L-glutamate is bound by residues 269-270 (NG) and Gly-270. Residue His-274 participates in Mg(2+) binding. ATP contacts are provided by residues 276–278 (NMS) and Ser-278. Positions 326, 332, and 344 each coordinate L-glutamate. ATP is bound by residues Arg-344, Arg-349, and Lys-357. A Mg(2+)-binding site is contributed by Glu-362. L-glutamate is bound at residue Arg-364. Tyr-402 is modified (O-AMP-tyrosine).

It belongs to the glutamine synthetase family. Oligomer of 12 subunits arranged in the form of two hexameric ring. The cofactor is Mg(2+).

It localises to the cytoplasm. It carries out the reaction L-glutamate + NH4(+) + ATP = L-glutamine + ADP + phosphate + H(+). Its activity is regulated as follows. The activity of this enzyme could be controlled by adenylation under conditions of abundant glutamine. Its function is as follows. Catalyzes the ATP-dependent biosynthesis of glutamine from glutamate and ammonia. The protein is Glutamine synthetase of Haemophilus influenzae (strain ATCC 51907 / DSM 11121 / KW20 / Rd).